A 220-amino-acid polypeptide reads, in one-letter code: UPF0758 protein ASA_4229 (220 aa).

One can recognise an MPN domain in the interval 95-220; sequence EQLQRGDALT…TVSFAERGWL (126 aa). Zn(2+) is bound by residues His169, His171, and Asp182. Positions 169–182 match the JAMM motif motif; the sequence is HNHPSGVAEPSRAD.

It belongs to the UPF0758 family.

This is UPF0758 protein ASA_4229 from Aeromonas salmonicida (strain A449).